A 99-amino-acid chain; its full sequence is CLAVATA3/ESR (CLE)-related protein 17 (99 aa).

A signal peptide spans 1–21 (MTHVLVRRQGQGKKRRWDVNM). Residues 77-89 (LSRDDIYGDDKRV) are compositionally biased toward basic and acidic residues. Residues 77 to 99 (LSRDDIYGDDKRVVHTGPNPLHN) are disordered. Residue Pro-94 is modified to Hydroxyproline. Pro-94 carries an O-linked (Ara...) hydroxyproline glycan.

The protein belongs to the CLV3/ESR signal peptide family. Post-translationally, the O-glycosylation (arabinosylation) of the hydroxyproline Pro-94 enhances binding affinity of the CLE17p peptide for its receptor. Mostly expressed in seedlings, roots, flowers, stems and apex, and, to a lower extent, in leaves and siliques.

Its subcellular location is the secreted. The protein resides in the extracellular space. Functionally, extracellular signal peptide that regulates cell fate. Represses root apical meristem maintenance. Regulates the transition of protophloem cells from proliferation to differentiation, thus impinging on postembryonic growth capacity of the root meristem; this signaling pathway requires CRN and CLV2. In Arabidopsis thaliana (Mouse-ear cress), this protein is CLAVATA3/ESR (CLE)-related protein 17.